The primary structure comprises 277 residues: Urease accessory protein UreD (277 aa).

This sequence belongs to the UreD family. As to quaternary structure, ureD, UreF and UreG form a complex that acts as a GTP-hydrolysis-dependent molecular chaperone, activating the urease apoprotein by helping to assemble the nickel containing metallocenter of UreC. The UreE protein probably delivers the nickel.

It is found in the cytoplasm. Functionally, required for maturation of urease via the functional incorporation of the urease nickel metallocenter. This Rhodopseudomonas palustris (strain BisB18) protein is Urease accessory protein UreD.